A 345-amino-acid polypeptide reads, in one-letter code: Ferrochelatase (345 aa).

The Fe cation site is built by histidine 215 and glutamate 296.

This sequence belongs to the ferrochelatase family.

The protein resides in the cytoplasm. It catalyses the reaction heme b + 2 H(+) = protoporphyrin IX + Fe(2+). The protein operates within porphyrin-containing compound metabolism; protoheme biosynthesis; protoheme from protoporphyrin-IX: step 1/1. Its function is as follows. Catalyzes the ferrous insertion into protoporphyrin IX. The polypeptide is Ferrochelatase (Rhodopseudomonas palustris (strain BisA53)).